We begin with the raw amino-acid sequence, 486 residues long: N-succinylglutamate 5-semialdehyde dehydrogenase (486 aa).

220 to 225 serves as a coordination point for NAD(+); sequence GSSRTG. Catalysis depends on residues glutamate 243 and cysteine 277.

This sequence belongs to the aldehyde dehydrogenase family. AstD subfamily.

The catalysed reaction is N-succinyl-L-glutamate 5-semialdehyde + NAD(+) + H2O = N-succinyl-L-glutamate + NADH + 2 H(+). It participates in amino-acid degradation; L-arginine degradation via AST pathway; L-glutamate and succinate from L-arginine: step 4/5. Catalyzes the NAD-dependent reduction of succinylglutamate semialdehyde into succinylglutamate. The protein is N-succinylglutamate 5-semialdehyde dehydrogenase of Shewanella sp. (strain W3-18-1).